The primary structure comprises 160 residues: V-type proton ATPase subunit c (160 aa).

Residues 1 to 6 lie on the Lumenal side of the membrane; sequence MSDLCP. The chain crosses the membrane as a helical span at residues 7–27; the sequence is VYAPFFGSIGCAAAIVFTCFG. At 28–53 the chain is on the cytoplasmic side; sequence ASYGTAKSGVGICATSVTRPDLLVKN. The chain crosses the membrane as a helical span at residues 54–74; that stretch reads VVPVVMAGIIAIYGLVVSVLV. Residues 75–90 lie on the Lumenal side of the membrane; sequence SDSLSQKQALYTGFIQ. A helical membrane pass occupies residues 91–111; that stretch reads LGAGLSVGLSGLAAGFAIGIV. The Cytoplasmic portion of the chain corresponds to 112-129; that stretch reads GDAGVRGTAQQPRLFVGM. A helical transmembrane segment spans residues 130–150; the sequence is ILILIFAEVLGLYGLIVALLL. Residues 151–160 lie on the Lumenal side of the membrane; that stretch reads NSRASQDVTC.

This sequence belongs to the V-ATPase proteolipid subunit family. V-ATPase is a heteromultimeric enzyme composed of a peripheral catalytic V1 complex (components A to H) attached to an integral membrane V0 proton pore complex (components: a, c, c', c'', d, e, f and VOA1). The decameric c-ring forms the proton-conducting pore, and is composed of eight proteolipid subunits c, one subunit c' and one subunit c''.

The protein resides in the vacuole membrane. In terms of biological role, proton-conducting pore forming subunit of the V0 complex of vacuolar(H+)-ATPase (V-ATPase), a multisubunit enzyme composed of a peripheral complex (V1) that hydrolyzes ATP and a membrane integral complex (V0) that translocates protons. V-ATPase is responsible for acidifying and maintaining the pH of intracellular compartments. This is V-type proton ATPase subunit c (VMA3) from Candida tropicalis (Yeast).